The sequence spans 458 residues: Protein unc-93 homolog A (458 aa).

The next 5 membrane-spanning stretches (helical) occupy residues 8–28 (VLVV…LQNL), 42–62 (TLST…PILI), 69–89 (WTIV…FHAN), 90–110 (WYTL…LWSA), and 140–160 (IFFL…SLVF). N-linked (GlcNAc...) asparagine glycosylation occurs at N190. 7 helical membrane-spanning segments follow: residues 202–222 (TLLG…AVFL), 258–275 (LCLL…QEFL), 286–306 (CALG…MTAL), 321–341 (AALY…FLLW), 345–365 (TNQL…DAVW), 390–410 (LGEA…CVST), and 412–432 (LYIL…VEYL).

Belongs to the unc-93 family.

It is found in the cell membrane. The chain is Protein unc-93 homolog A (Unc93a) from Mus musculus (Mouse).